A 115-amino-acid polypeptide reads, in one-letter code: Large ribosomal subunit protein bL20 (115 aa).

Belongs to the bacterial ribosomal protein bL20 family.

Functionally, binds directly to 23S ribosomal RNA and is necessary for the in vitro assembly process of the 50S ribosomal subunit. It is not involved in the protein synthesizing functions of that subunit. The sequence is that of Large ribosomal subunit protein bL20 from Chlorobium chlorochromatii (strain CaD3).